Reading from the N-terminus, the 207-residue chain is Outer-membrane lipoprotein LolB (207 aa).

The N-terminal stretch at 1–21 (MTLPDFRLIRLLPLASLVLTA) is a signal peptide. Cys-22 carries the N-palmitoyl cysteine lipid modification. Cys-22 carries S-diacylglycerol cysteine lipidation.

It belongs to the LolB family. In terms of assembly, monomer.

The protein resides in the cell outer membrane. In terms of biological role, plays a critical role in the incorporation of lipoproteins in the outer membrane after they are released by the LolA protein. This chain is Outer-membrane lipoprotein LolB, found in Salmonella arizonae (strain ATCC BAA-731 / CDC346-86 / RSK2980).